An 887-amino-acid polypeptide reads, in one-letter code: FLCFISSYSASVKGHTTGLSLNNDRLYKLTYSTEVFLDRGKGNLQDSVGYRISSNVDVALLWRSPDGDDNQLIQITMKDVNLENVNQQRGEKSIFKGKKSSQIIRKENLEAMQRPVLLHLIHGKIKEFYSYQNEPAAIENLKRGLASLFQMQLSSGTTNEVDISGDCKVTYQAHQDKVTKIKALDSCKIERAGFTTPHQVLGVTSKATSVTTYKIEDSFVVAVLSEEIRALRLNFLQSIAGKIVSRQKLELKTTEASVRLKPGKQVAAIIKAVDSKYTAIPIVGQVFQSKCKGCPSLSEHWQSIRKHLQPDNLSKAEAVRSFLAFIKHLRTAKKEEILQILKAENKEVLPQLVDAVTSAQTPDSLDAILDFLDFKSTESVILQERFLYACAFASHPDEELLRALISKFKGSFGSNDIRESVMIIIGALVRKLCQNQGCKLKGVIEAKKLILGGLEKAEKKEDIVMYLLALKNARLPEGIPLLLKYTETGEGPISHLAATTLQRYDVPFITDEVKKTMNRIYHQNRKIHEKTVRTTAAAIILKNNPSYMEVKNILLSIGELPKEMNKYMLSIVQDILRFETPASKMVRQVLKEMVAHNYDRFSKSGSSSAYTGYVERTSHSASTYSLDILYSGSGILRRSNLNIFQYIEKTPLHGIQVVIEAQGLEALIAATPDEGEENLDSYAGLSALLFDVQLRPVTFFNGYSDLMSKMLSASSDPMSVVKGLLLLIDHSQELQLQSGLKANMDVQGGLAIDITGAMEFSLWYRESKTRVKNRVSVLITGGITVDSSFVKAGLEIGAETEAGLEFISTVQFSQYPFLVCLQMDKEDVPYRQFETKYERLSTGRGYISRKRKESLIGGCEFPLHQENSDMCKVVFAPQPESSSSGWF.

A signal peptide spans 1–11; the sequence is FLCFISSYSAS. A Vitellogenin domain is found at 21 to 655; sequence LNNDRLYKLT…YIEKTPLHGI (635 aa). A disulfide bridge links Cys167 with Cys187.

As to quaternary structure, heterodimer; heterodimerizes with the protein disulfide isomerase (P4HB/PDI). Interacts with APOB. Interacts with PRAP1.

It localises to the endoplasmic reticulum. It is found in the golgi apparatus. The catalysed reaction is a 1,2-diacyl-sn-glycero-3-phosphocholine(in) = a 1,2-diacyl-sn-glycero-3-phosphocholine(out). The enzyme catalyses a 1,2-diacyl-sn-glycero-3-phosphoethanolamine(in) = a 1,2-diacyl-sn-glycero-3-phosphoethanolamine(out). It carries out the reaction a cholesterol ester(in) = a cholesterol ester(out). It catalyses the reaction a triacyl-sn-glycerol(in) = a triacyl-sn-glycerol(out). Functionally, catalyzes the transport of triglyceride, cholesteryl ester, and phospholipid between phospholipid surfaces. Required for the assembly and secretion of plasma lipoproteins that contain apolipoprotein B. May be involved in regulating cholesteryl ester biosynthesis in cells that produce lipoproteins. The chain is Microsomal triglyceride transfer protein large subunit (MTTP) from Bos taurus (Bovine).